The sequence spans 567 residues: Glutamate--tRNA ligase (567 aa).

Positions 106-116 (PNPDGPLHLGN) match the 'HIGH' region motif.

It belongs to the class-I aminoacyl-tRNA synthetase family. Glutamate--tRNA ligase type 2 subfamily.

The protein localises to the cytoplasm. The enzyme catalyses tRNA(Glu) + L-glutamate + ATP = L-glutamyl-tRNA(Glu) + AMP + diphosphate. Catalyzes the attachment of glutamate to tRNA(Glu) in a two-step reaction: glutamate is first activated by ATP to form Glu-AMP and then transferred to the acceptor end of tRNA(Glu). This chain is Glutamate--tRNA ligase, found in Sulfolobus acidocaldarius (strain ATCC 33909 / DSM 639 / JCM 8929 / NBRC 15157 / NCIMB 11770).